The primary structure comprises 157 residues: V-type proton ATPase 16 kDa proteolipid subunit c (157 aa).

The Lumenal portion of the chain corresponds to methionine 1–tyrosine 10. The helical transmembrane segment at glycine 11 to glycine 33 threads the bilayer. The Cytoplasmic portion of the chain corresponds to threonine 34–serine 55. The chain crosses the membrane as a helical span at residues isoleucine 56–isoleucine 76. Residues alanine 77 to histidine 94 are Lumenal-facing. A helical membrane pass occupies residues leucine 95 to glycine 116. Residues aspartate 117–arginine 128 lie on the Cytoplasmic side of the membrane. Residues leucine 129–leucine 154 form a helical membrane-spanning segment. Over tyrosine 155 to lysine 157 the chain is Lumenal.

This sequence belongs to the V-ATPase proteolipid subunit family. V-ATPase is a heteromultimeric enzyme made up of two complexes: the ATP-hydrolytic V1 complex and the proton translocation V0 complex. The V1 complex consists of three catalytic AB heterodimers that form a heterohexamer, three peripheral stalks each consisting of EG heterodimers, one central rotor including subunits D and F, and the regulatory subunits C and H. The proton translocation complex V0 consists of the proton transport subunit a, a ring of proteolipid subunits c9c'', rotary subunit d, subunits e and f, and the accessory subunits VhaAC45 and ATP6AP2.

It localises to the membrane. In terms of biological role, proton-conducting pore forming subunit of the V0 complex of vacuolar(H+)-ATPase (V-ATPase), a multisubunit enzyme composed of a peripheral complex (V1) that hydrolyzes ATP and a membrane integral complex (V0) that translocates protons. V-ATPase is responsible for acidifying and maintaining the pH of intracellular compartments and in some cell types, is targeted to the plasma membrane, where it is responsible for acidifying the extracellular environment. This chain is V-type proton ATPase 16 kDa proteolipid subunit c, found in Aedes aegypti (Yellowfever mosquito).